The sequence spans 321 residues: MGEPHGSMRILVTGGSGLVGRAIQKVVADGAGLPGEEWVFVSSKDADLTDAAQTQALFQKVQPTHVIHLAAMVGGLFRNIKYNLDFWRKNVHINDNVLHSAFEVGARKVVSCLSTCIFPDKTTYPIDETMIHNGPPHSSNFGYSYAKRMIDVQNRAYFQQHGCTFTAVIPTNVFGPYDNFNIEDGHVLPGLIHKVHLAKSSDSALTVWGTGKPRRQFIYSLDLARLFIWVLREYSEVEPIILSVGEEDEVSIKEAAEAVVEAMDFNGEVTFDSTKSDGQYKKTASNGKLRSYLPDFRFTPFKQAVKETCTWFTDNYEQARK.

14-20 (GGSGLVG) is a binding site for NADP(+). Tyrosine 143 (proton donor/acceptor) is an active-site residue. NADP(+)-binding positions include lysine 147, 170 to 173 (PTNV), and histidine 186. Residues lysine 194, tryptophan 208, arginine 215, and aspartate 277 each coordinate substrate.

Belongs to the NAD(P)-dependent epimerase/dehydratase family. Fucose synthase subfamily. Homodimer.

The enzyme catalyses GDP-beta-L-fucose + NADP(+) = GDP-4-dehydro-alpha-D-rhamnose + NADPH + H(+). The protein operates within nucleotide-sugar biosynthesis; GDP-L-fucose biosynthesis via de novo pathway; GDP-L-fucose from GDP-alpha-D-mannose: step 2/2. Its function is as follows. Catalyzes the two-step NADP-dependent conversion of GDP-4-dehydro-6-deoxy-D-mannose to GDP-fucose, involving an epimerase and a reductase reaction. This Mus musculus (Mouse) protein is GDP-L-fucose synthase.